Here is a 120-residue protein sequence, read N- to C-terminus: Prefoldin subunit beta (120 aa).

This sequence belongs to the prefoldin subunit beta family. Heterohexamer of two alpha and four beta subunits.

It localises to the cytoplasm. In terms of biological role, molecular chaperone capable of stabilizing a range of proteins. Seems to fulfill an ATP-independent, HSP70-like function in archaeal de novo protein folding. The protein is Prefoldin subunit beta of Methanospirillum hungatei JF-1 (strain ATCC 27890 / DSM 864 / NBRC 100397 / JF-1).